Reading from the N-terminus, the 929-residue chain is DNA mismatch repair protein MutS (929 aa).

Positions Pro22 to Gly46 are disordered. Positions Ala23–Ala32 are enriched in low complexity. Position 678 to 685 (Gly678 to Ser685) interacts with ATP.

It belongs to the DNA mismatch repair MutS family.

Functionally, this protein is involved in the repair of mismatches in DNA. It is possible that it carries out the mismatch recognition step. This protein has a weak ATPase activity. This is DNA mismatch repair protein MutS from Rhodospirillum rubrum (strain ATCC 11170 / ATH 1.1.1 / DSM 467 / LMG 4362 / NCIMB 8255 / S1).